The primary structure comprises 681 residues: Mating-type protein beta1-1 (681 aa).

The segment at residues D165–E227 is a DNA-binding region (homeobox; TALE-type). The segment covering L307–A318 has biased composition (basic and acidic residues). Disordered stretches follow at residues L307–S341, A353–C381, and S394–F466. Low complexity predominate over residues T413–T430.

It belongs to the TALE/M-ATYP homeobox family. In terms of assembly, may dimerize.

The protein resides in the nucleus. Has a major regulatory role in sexual and asexual development. It may bind DNA itself or it may have a role in preventing DNA-binding of another protein. The polypeptide is Mating-type protein beta1-1 (Coprinopsis cinerea (Inky cap fungus)).